The primary structure comprises 201 residues: MAQSEDPEDFIAPAAHRVRPGTLLLANTDLLEPTFRRTVIYIVEHNSGGTLGVILNRPSETAVYNVLPQWAEVTAKPKTMFIGGPVKRDSALCLATLRVGMQADGVDGLRHVQGRVVMVDLDADPEELAPVIEGVRIFAGYSGWTTGQLDGEIERDDWIVLSALPSDVLIEPRIDLWGRVLRRQPLPMSLLATHPIDVSRN.

This sequence belongs to the UPF0301 (AlgH) family.

In Mycolicibacterium smegmatis (strain ATCC 700084 / mc(2)155) (Mycobacterium smegmatis), this protein is UPF0301 protein MSMEG_6921/MSMEI_6732.